The following is a 72-amino-acid chain: MAKEDNIEMQGTVLETLPNTMFRVELENGHMVTAHISGKMRKNYIRILTGDKVTVELTPYDLSKGRIVFRSR.

The S1-like domain maps to 1-72; that stretch reads MAKEDNIEMQ…SKGRIVFRSR (72 aa).

It belongs to the IF-1 family. Component of the 30S ribosomal translation pre-initiation complex which assembles on the 30S ribosome in the order IF-2 and IF-3, IF-1 and N-formylmethionyl-tRNA(fMet); mRNA recruitment can occur at any time during PIC assembly.

The protein localises to the cytoplasm. In terms of biological role, one of the essential components for the initiation of protein synthesis. Stabilizes the binding of IF-2 and IF-3 on the 30S subunit to which N-formylmethionyl-tRNA(fMet) subsequently binds. Helps modulate mRNA selection, yielding the 30S pre-initiation complex (PIC). Upon addition of the 50S ribosomal subunit IF-1, IF-2 and IF-3 are released leaving the mature 70S translation initiation complex. This is Translation initiation factor IF-1 from Salmonella paratyphi A (strain ATCC 9150 / SARB42).